Reading from the N-terminus, the 387-residue chain is Succinate--CoA ligase [ADP-forming] subunit beta (387 aa).

The ATP-grasp domain occupies 9 to 236; that stretch reads KELFAKHNVP…RAATDPLELK (228 aa). ATP-binding positions include Lys45, 52 to 54, Ser94, and Glu99; that span reads GRG. Mg(2+) contacts are provided by Asn191 and Asp205. Substrate is bound by residues Asn256 and 318–320; that span reads GIT.

Belongs to the succinate/malate CoA ligase beta subunit family. In terms of assembly, heterotetramer of two alpha and two beta subunits. Mg(2+) serves as cofactor.

The enzyme catalyses succinate + ATP + CoA = succinyl-CoA + ADP + phosphate. It catalyses the reaction GTP + succinate + CoA = succinyl-CoA + GDP + phosphate. It functions in the pathway carbohydrate metabolism; tricarboxylic acid cycle; succinate from succinyl-CoA (ligase route): step 1/1. Succinyl-CoA synthetase functions in the citric acid cycle (TCA), coupling the hydrolysis of succinyl-CoA to the synthesis of either ATP or GTP and thus represents the only step of substrate-level phosphorylation in the TCA. The beta subunit provides nucleotide specificity of the enzyme and binds the substrate succinate, while the binding sites for coenzyme A and phosphate are found in the alpha subunit. The protein is Succinate--CoA ligase [ADP-forming] subunit beta of Mycobacterium marinum (strain ATCC BAA-535 / M).